Here is a 200-residue protein sequence, read N- to C-terminus: dTTP/UTP pyrophosphatase (200 aa).

Aspartate 73 acts as the Proton acceptor in catalysis.

This sequence belongs to the Maf family. YhdE subfamily. A divalent metal cation serves as cofactor.

The protein localises to the cytoplasm. It catalyses the reaction dTTP + H2O = dTMP + diphosphate + H(+). The enzyme catalyses UTP + H2O = UMP + diphosphate + H(+). Nucleoside triphosphate pyrophosphatase that hydrolyzes dTTP and UTP. May have a dual role in cell division arrest and in preventing the incorporation of modified nucleotides into cellular nucleic acids. This chain is dTTP/UTP pyrophosphatase, found in Chromohalobacter salexigens (strain ATCC BAA-138 / DSM 3043 / CIP 106854 / NCIMB 13768 / 1H11).